The sequence spans 243 residues: Proteasome subunit beta (243 aa).

Residues 1–16 (MRAPQHNSDFSRTVNQ) show a composition bias toward polar residues. Residues 1–29 (MRAPQHNSDFSRTVNQLADDPNPYEPEVG) form a disordered region. A propeptide spans 1-48 (MRAPQHNSDFSRTVNQLADDPNPYEPEVGSMPKNEFSRADLDNVNKTG) (removed in mature form; by autocatalysis). Thr-49 functions as the Nucleophile in the catalytic mechanism.

Belongs to the peptidase T1B family. As to quaternary structure, the 20S proteasome core is composed of 14 alpha and 14 beta subunits that assemble into four stacked heptameric rings, resulting in a barrel-shaped structure. The two inner rings, each composed of seven catalytic beta subunits, are sandwiched by two outer rings, each composed of seven alpha subunits. The catalytic chamber with the active sites is on the inside of the barrel. Has a gated structure, the ends of the cylinder being occluded by the N-termini of the alpha-subunits. Is capped at one or both ends by the proteasome regulatory ATPase, PAN.

It is found in the cytoplasm. The catalysed reaction is Cleavage of peptide bonds with very broad specificity.. Its activity is regulated as follows. The formation of the proteasomal ATPase PAN-20S proteasome complex, via the docking of the C-termini of PAN into the intersubunit pockets in the alpha-rings, triggers opening of the gate for substrate entry. Interconversion between the open-gate and close-gate conformations leads to a dynamic regulation of the 20S proteasome proteolysis activity. Component of the proteasome core, a large protease complex with broad specificity involved in protein degradation. The polypeptide is Proteasome subunit beta (Natrialba magadii (strain ATCC 43099 / DSM 3394 / CCM 3739 / CIP 104546 / IAM 13178 / JCM 8861 / NBRC 102185 / NCIMB 2190 / MS3) (Natronobacterium magadii)).